A 161-amino-acid chain; its full sequence is Disulfide bond formation protein B (161 aa).

Over 1–8 (MQANSRTY) the chain is Cytoplasmic. A helical membrane pass occupies residues 9-25 (FLLIAIVSFAMVGAALY). The Periplasmic portion of the chain corresponds to 26–43 (MQYAENLQPCPLCIMQRF). Cys35 and Cys38 form a disulfide bridge. The chain crosses the membrane as a helical span at residues 44–58 (AFIGIGIFSLLAVIA). At 59–63 (QNTRT) the chain is on the cytoplasmic side. The helical transmembrane segment at 64 to 81 (LWQGLGMLSGVGGIAVAG) threads the bilayer. Over 82 to 136 (YQVALLMNPKASCGIDPLENWVNSLPTAKLLPQVFYSDGLCTAPTPPILGLSIPA) the chain is Periplasmic. Residues Cys94 and Cys122 are joined by a disulfide bond. Residues 137–155 (WSLIWLLILTLTLAVGLIR) form a helical membrane-spanning segment. The Cytoplasmic portion of the chain corresponds to 156-161 (REKHFR).

It belongs to the DsbB family.

Its subcellular location is the cell inner membrane. Functionally, required for disulfide bond formation in some periplasmic proteins. Acts by oxidizing the DsbA protein. The protein is Disulfide bond formation protein B of Cupriavidus metallidurans (strain ATCC 43123 / DSM 2839 / NBRC 102507 / CH34) (Ralstonia metallidurans).